The primary structure comprises 316 residues: Pantothenate kinase (316 aa).

95 to 102 (GSVAVGKS) lines the ATP pocket.

It belongs to the prokaryotic pantothenate kinase family.

The protein resides in the cytoplasm. It carries out the reaction (R)-pantothenate + ATP = (R)-4'-phosphopantothenate + ADP + H(+). It participates in cofactor biosynthesis; coenzyme A biosynthesis; CoA from (R)-pantothenate: step 1/5. The chain is Pantothenate kinase from Cronobacter sakazakii (strain ATCC BAA-894) (Enterobacter sakazakii).